The sequence spans 37 residues: Cytochrome b6-f complex subunit 5 (37 aa).

A helical transmembrane segment spans residues 5 to 25; the sequence is LLSGIVLGLMPVTLAGLFTTA.

This sequence belongs to the PetG family. In terms of assembly, the 4 large subunits of the cytochrome b6-f complex are cytochrome b6, subunit IV (17 kDa polypeptide, PetD), cytochrome f and the Rieske protein, while the 4 small subunits are PetG, PetL, PetM and PetN. The complex functions as a dimer.

Its subcellular location is the plastid. The protein localises to the chloroplast thylakoid membrane. In terms of biological role, component of the cytochrome b6-f complex, which mediates electron transfer between photosystem II (PSII) and photosystem I (PSI), cyclic electron flow around PSI, and state transitions. PetG is required for either the stability or assembly of the cytochrome b6-f complex. In Ostreococcus tauri, this protein is Cytochrome b6-f complex subunit 5.